A 758-amino-acid polypeptide reads, in one-letter code: Ferrichrome receptor FcuA (758 aa).

The signal sequence occupies residues 1 to 36 (MNQTISSRAPQKRLAPRLLCVMIGAALGTLSASSWA). The TonB box motif lies at 66 to 73 (DTITVVGA). One can recognise a TBDR plug domain in the interval 106–216 (DARNVPFNVI…VGGMINLEPK (111 aa)). One can recognise a TBDR beta-barrel domain in the interval 221 to 758 (TPLTRVTVDY…ALKLSVSMDF (538 aa)). The TonB C-terminal box motif lies at 741–758 (YIYQGDPRALKLSVSMDF).

The protein belongs to the TonB-dependent receptor family.

It is found in the cell outer membrane. Its function is as follows. Receptor for the hydroxamate siderophore, ferrichrome. Binds also to most other ferrichrome derivatives except enantio ferrichrome and ferric rhodotorulate. The protein is Ferrichrome receptor FcuA (fcuA) of Yersinia enterocolitica.